A 179-amino-acid chain; its full sequence is Large ribosomal subunit protein bL9 (179 aa).

The disordered stretch occupies residues 155–179; it reads KPEEAPVPVAEEPTAETEQAEVAAE. The span at 167–179 shows a compositional bias: acidic residues; sequence PTAETEQAEVAAE.

It belongs to the bacterial ribosomal protein bL9 family.

In terms of biological role, binds to the 23S rRNA. This Porphyromonas gingivalis (strain ATCC BAA-308 / W83) protein is Large ribosomal subunit protein bL9.